The sequence spans 511 residues: Prolyl 3-hydroxylase OGFOD1 (511 aa).

Residues 1-20 are disordered; the sequence is MTGKRGTAAGTDGSGNKKGK. A Fe2OG dioxygenase domain is found at 138-240; it reads KTVDISCAQY…RLSVSGWFHG (103 aa). Positions 156 and 158 each coordinate Fe cation. Tyr-170 contacts 2-oxoglutarate. His-219 is a binding site for Fe cation. Arg-231 lines the 2-oxoglutarate pocket. The segment at 372–403 is disordered; that stretch reads NEESDEGEGPSEPNTVSQQGASSEDDKVPSCS.

This sequence belongs to the TPA1 family. Monomer. Requires Fe(2+) as cofactor. L-ascorbate serves as cofactor.

It is found in the cytoplasm. The protein resides in the nucleus. The enzyme catalyses [ribosomal protein uS12]-L-proline + 2-oxoglutarate + O2 = [ribosomal protein uS12]-(3S)-3-hydroxy-L-proline + succinate + CO2. Its function is as follows. Prolyl 3-hydroxylase that catalyzes 3-hydroxylation of 'Pro-62' of small ribosomal subunit uS12 (rps23), thereby regulating protein translation termination efficiency. Involved in stress granule formation. The chain is Prolyl 3-hydroxylase OGFOD1 (ogfod1) from Xenopus laevis (African clawed frog).